Here is a 1534-residue protein sequence, read N- to C-terminus: Dicer-like protein 2 (1534 aa).

Residues 1–10 (MDQDPRKDNP) are compositionally biased toward basic and acidic residues. The segment at 1–36 (MDQDPRKDNPVEMDVDRDDSSQDPDDNESFKSALDE) is disordered. Over residues 11–27 (VEMDVDRDDSSQDPDDN) the composition is skewed to acidic residues. Residues 65–249 (TPAALTARAY…IEKLEQVLDA (185 aa)) enclose the Helicase ATP-binding domain. An ATP-binding site is contributed by 78–85 (MFEASLKQ). Positions 192–195 (DEAH) match the DEAH box motif. Residues 404–575 (KVQTLLKVLA…NAELELLDDP (172 aa)) enclose the Helicase C-terminal domain. The Dicer dsRNA-binding fold domain maps to 597 to 700 (ARSHLNHFCA…LPTKVSDFLA (104 aa)). RNase III domains are found at residues 959–1107 (MSLV…MCGG) and 1153–1353 (LEPL…VDSG). Residues E1193, D1339, and E1342 each coordinate Mg(2+). One can recognise a DRBM domain in the interval 1383–1483 (HPNVELQILA…AEKGCLVIKA (101 aa)). Positions 1492 to 1504 (KAAAKEDKGHNTE) are enriched in basic and acidic residues. The segment at 1492–1534 (KAAAKEDKGHNTENGDANADNGQSGEKEEVPDCRDADGDTVMN) is disordered. A compositionally biased stretch (polar residues) spans 1505–1515 (NGDANADNGQS). The segment covering 1516 to 1528 (GEKEEVPDCRDAD) has biased composition (basic and acidic residues).

The protein belongs to the helicase family. Dicer subfamily. It depends on Mg(2+) as a cofactor. Requires Mn(2+) as cofactor.

In terms of biological role, dicer-like endonuclease involved in cleaving double-stranded RNA in the RNA interference (RNAi) pathway. Produces 21 to 25 bp dsRNAs (siRNAs) which target the selective destruction of homologous RNAs leading to sequence-specific suppression of gene expression, called post-transcriptional gene silencing (PTGS). Part of a broad host defense response against viral infection and transposons. Controls the expression of the non-LTR retrotransposon Tad in the African strain, Adiomopoume. The polypeptide is Dicer-like protein 2 (dcl-2) (Neurospora crassa (strain ATCC 24698 / 74-OR23-1A / CBS 708.71 / DSM 1257 / FGSC 987)).